An 865-amino-acid chain; its full sequence is Leucine--tRNA ligase (865 aa).

Residues 58–68 (PYPSGNLHMGH) carry the 'HIGH' region motif. Residues 629–633 (KMSKS) carry the 'KMSKS' region motif. Residue K632 coordinates ATP.

Belongs to the class-I aminoacyl-tRNA synthetase family.

The protein localises to the cytoplasm. The enzyme catalyses tRNA(Leu) + L-leucine + ATP = L-leucyl-tRNA(Leu) + AMP + diphosphate. This Synechococcus elongatus (strain ATCC 33912 / PCC 7942 / FACHB-805) (Anacystis nidulans R2) protein is Leucine--tRNA ligase.